Consider the following 259-residue polypeptide: MTDLKASSLRALKLMDLTTLNDDDTDEKVIALCHQAKTPVGNTAAICIYPRFIPIARKTLKEQGTPEIRIATVTNFPHGNDDIEIALAETRAAIAYGADEVDVVFPYRALMAGNEQVGFDLVKACKEACAAANVMLKVIIETGELKDEALIRKASEISIKAGADFIKTSTGKVAVNATPESARIMMEVIRDMGVEKTVGFKPAGGVRTAEDAQKYLAIADELFGADWADARHYRFGASSLLASLLKALGHGDGKSASSY.

D102 serves as the catalytic Proton donor/acceptor. K167 (schiff-base intermediate with acetaldehyde) is an active-site residue. Catalysis depends on K201, which acts as the Proton donor/acceptor.

The protein belongs to the DeoC/FbaB aldolase family. DeoC type 2 subfamily.

It localises to the cytoplasm. The enzyme catalyses 2-deoxy-D-ribose 5-phosphate = D-glyceraldehyde 3-phosphate + acetaldehyde. The protein operates within carbohydrate degradation; 2-deoxy-D-ribose 1-phosphate degradation; D-glyceraldehyde 3-phosphate and acetaldehyde from 2-deoxy-alpha-D-ribose 1-phosphate: step 2/2. In terms of biological role, catalyzes a reversible aldol reaction between acetaldehyde and D-glyceraldehyde 3-phosphate to generate 2-deoxy-D-ribose 5-phosphate. The polypeptide is Deoxyribose-phosphate aldolase (Escherichia coli O8 (strain IAI1)).